We begin with the raw amino-acid sequence, 211 residues long: Histone H1-beta, late embryonic (211 aa).

Disordered regions lie at residues 1-22 (MAAE…PSSS) and 81-211 (KGAS…AAKK). In terms of domain architecture, H15 spans 17-91 (AHPSSSEMVL…GASGSFKLGK (75 aa)). Basic and acidic residues-rich tracts occupy residues 95 to 107 (GKSD…DAAK) and 114 to 123 (KKKEAKEKKA). 2 stretches are compositionally biased toward basic residues: residues 124–177 (ARSK…KKAA) and 185–211 (KAAK…AAKK).

It belongs to the histone H1/H5 family.

It localises to the nucleus. Its subcellular location is the chromosome. Functionally, histones H1 are necessary for the condensation of nucleosome chains into higher-order structures. The polypeptide is Histone H1-beta, late embryonic (Strongylocentrotus purpuratus (Purple sea urchin)).